Here is a 507-residue protein sequence, read N- to C-terminus: MIIKLSIEKGLSECTDFNKVLMFIQPLKLKLIETKTLEYLYSLISKKFKIKKSFLLYTEDGYAIPPSEEGSILKEIDKTFKVLKLNKVKKNEKTDDSGDDLMETDSDNKNKSSESDSSESDSSESESDSSESESESESNETSENESSSSSEPESSLAKKKLLIQQLKRDFQLKEKLQQEQQKQKEAQKPKEKPQQQQQQQQQQQQQQQQQQQQQQQQQQQQQQQKQKQKQQKQQIEQQHKKPPQQQQQQQQQQQQQQQQQQQQQQQQEEVPIGIDDVLTNFSYTISYDNIDELLVEEEKIKRKELEQKKRKLQSQLDNDGLANKNDNNSNNNNYNNSNNNDSNNNNTNKPLSKRQKKLLKKQQNSSQIKENYTINAINNKNDNSTNDSNNNNDNNNNNKNDTNDSNNDDNNNDKKKNNNYSTFKDLTIPNVNDKIAFQKHILLDYVLTVSEYLEGRIEKIDSDILYIRLEPGFDDFEFLDNEFFEESGALGVPVKSLISPKLISDNN.

Disordered stretches follow at residues 91 to 162, 174 to 255, and 309 to 422; these read NEKT…KKLL, EKLQ…QQQQ, and KRKL…NYST. A compositionally biased stretch (acidic residues) spans 116–143; sequence DSSESDSSESESDSSESESESESNETSE. Residues 144–155 show a composition bias toward low complexity; that stretch reads NESSSSSEPESS. The span at 174–193 shows a compositional bias: basic and acidic residues; the sequence is EKLQQEQQKQKEAQKPKEKP. Low complexity-rich tracts occupy residues 194–236, 243–255, and 313–350; these read QQQQ…QQIE, PQQQQQQQQQQQQ, and QSQLDNDGLANKNDNNSNNNNYNNSNNNDSNNNNTNKP. Over residues 351–360 the composition is skewed to basic residues; sequence LSKRQKKLLK. Residues 378 to 409 show a composition bias toward low complexity; the sequence is NNKNDNSTNDSNNNNDNNNNNKNDTNDSNNDD.

This is an uncharacterized protein from Dictyostelium discoideum (Social amoeba).